The primary structure comprises 496 residues: Cytochrome P450 71D181 (496 aa).

The chain crosses the membrane as a helical; Signal-anchor for type II membrane protein span at residues 1–21 (MDISILWVAIILVISSYFIFM). Heme is bound at residue C435. Residues 471-496 (MSETPGLSGPRKNPLIMVPTIHNPTS) form a disordered region.

The protein belongs to the cytochrome P450 family. Requires heme as cofactor.

It localises to the membrane. It carries out the reaction gamma-terpinene + 2 reduced [NADPH--hemoprotein reductase] + 2 O2 = carvacrol + 2 oxidized [NADPH--hemoprotein reductase] + 3 H2O + 2 H(+). The enzyme catalyses (4S)-limonene + reduced [NADPH--hemoprotein reductase] + O2 = (1S,5R)-carveol + oxidized [NADPH--hemoprotein reductase] + H2O + H(+). The catalysed reaction is (4R)-limonene + reduced [NADPH--hemoprotein reductase] + O2 = (1R,5S)-carveol + oxidized [NADPH--hemoprotein reductase] + H2O + H(+). It catalyses the reaction alpha-terpinene + 2 reduced [NADPH--hemoprotein reductase] + 2 O2 = carvacrol + 2 oxidized [NADPH--hemoprotein reductase] + 3 H2O + 2 H(+). It participates in secondary metabolite biosynthesis; terpenoid biosynthesis. In terms of biological role, involved in the biosynthesis of phenolic monoterpenes natural products thymol and carvacrol which have a broad range of biological activities acting as antimicrobial compounds, insecticides, antioxidants and pharmaceutical agents. Catalyzes the C2-hydroxylation of gamma-terpinene and alpha-terpinene to produce carvacrol. Also mediates the C6-hydroxylation of (4S)-limonene and (4R)-limonene to form carveol. The sequence is that of Cytochrome P450 71D181 from Thymus vulgaris (Thyme).